A 697-amino-acid chain; its full sequence is Choline transporter-like protein 2 (697 aa).

Over 1-30 (MDMEEKPKYGEPRKFDPSFKGPIQNRGCTD) the chain is Cytoplasmic. A helical transmembrane segment spans residues 31 to 51 (IVCCIIFIIAILGYLAVGILA). Topologically, residues 52–226 (WTHGDPRKVI…KIFEDYTKSW (175 aa)) are extracellular. N-linked (GlcNAc...) asparagine glycans are attached at residues N113 and N204. A helical membrane pass occupies residues 227–247 (YWILICLLIAVVLSLIFIVLL). At 248 to 249 (RF) the chain is on the cytoplasmic side. Residues 250 to 270 (LAGVMVWVMILMVVAVIAYGI) form a helical membrane-spanning segment. The Extracellular portion of the chain corresponds to 271-309 (AHCSIKYVSLKDTPGSNITLQQLGFQPDFAVYLHIRQTW). A glycan (N-linked (GlcNAc...) asparagine) is linked at N287. Residues 310-330 (LAFIIILAILELIIILLLIFL) traverse the membrane as a helical segment. Over 331–353 (RNRIRVAVELMKEASRAIGYVMS) the chain is Cytoplasmic. The chain crosses the membrane as a helical span at residues 354-374 (SLVFPIFTFFLLAIVIAFWGV). Topologically, residues 375-435 (NAVFLSTSSE…YGGETPYHKY (61 aa)) are extracellular. N-linked (GlcNAc...) asparagine glycans are attached at residues N391 and N406. Residues 436–456 (LILLQFYNVFLFFWCANFVTA) form a helical membrane-spanning segment. At 457-498 (LGQMTLAGAFASYYWAFDKSKDMPAFPLCASLGRSLRYHTGS) the chain is on the cytoplasmic side. A helical membrane pass occupies residues 499 to 519 (LAFGSLLLAIVQVIRVLLEYI). Residues 520 to 593 (DHKLKGAENK…RVVVLDKVTD (74 aa)) are Extracellular-facing. A helical transmembrane segment spans residues 594–614 (FILFLGKLLIVGLVGIFAFFF). Residues 615–632 (FSGQTDAFKGTAPSLHYY) lie on the Cytoplasmic side of the membrane. The helical transmembrane segment at 633 to 653 (WVPILTVLVCSYLIAHGFFSV) threads the bilayer. Residues 654–697 (YAMCVDTLFLCFLEDLERNDGSAERPYLMSENLLNVLKKKNQAN) lie on the Extracellular side of the membrane.

Belongs to the CTL (choline transporter-like) family.

The protein localises to the cell membrane. It is found in the mitochondrion outer membrane. It carries out the reaction choline(out) + n H(+)(in) = choline(in) + n H(+)(out). The catalysed reaction is ethanolamine(out) + n H(+)(in) = ethanolamine(in) + n H(+)(out). Its function is as follows. Choline/H+ antiporter, mainly in mitochodria. Also acts as a low-affinity ethanolamine/H+ antiporter, regulating the supply of extracellular ethanolamine (Etn) for the CDP-Etn pathway, redistribute intracellular Etn and balance the CDP-Cho and CDP-Etn arms of the Kennedy pathway. This chain is Choline transporter-like protein 2 (slc44a2), found in Danio rerio (Zebrafish).